Here is a 415-residue protein sequence, read N- to C-terminus: Serine hydroxymethyltransferase (415 aa).

Residues leucine 120 and 124–126 contribute to the (6S)-5,6,7,8-tetrahydrofolate site; that span reads GHL. Position 229 is an N6-(pyridoxal phosphate)lysine (lysine 229).

The protein belongs to the SHMT family. Homodimer. It depends on pyridoxal 5'-phosphate as a cofactor.

Its subcellular location is the cytoplasm. The catalysed reaction is (6R)-5,10-methylene-5,6,7,8-tetrahydrofolate + glycine + H2O = (6S)-5,6,7,8-tetrahydrofolate + L-serine. It participates in one-carbon metabolism; tetrahydrofolate interconversion. The protein operates within amino-acid biosynthesis; glycine biosynthesis; glycine from L-serine: step 1/1. Functionally, catalyzes the reversible interconversion of serine and glycine with tetrahydrofolate (THF) serving as the one-carbon carrier. This reaction serves as the major source of one-carbon groups required for the biosynthesis of purines, thymidylate, methionine, and other important biomolecules. Also exhibits THF-independent aldolase activity toward beta-hydroxyamino acids, producing glycine and aldehydes, via a retro-aldol mechanism. The protein is Serine hydroxymethyltransferase of Desulforudis audaxviator (strain MP104C).